We begin with the raw amino-acid sequence, 360 residues long: Phospho-N-acetylmuramoyl-pentapeptide-transferase (360 aa).

10 helical membrane-spanning segments follow: residues 26–46 (AILG…KLIE), 74–94 (MGGL…GDLG), 97–117 (YVWV…IDDY), 134–154 (YILQ…TAAN), 168–188 (VMPQ…VGAS), 199–219 (GLAI…AYLS), 236–256 (SGEL…FLWF), 263–283 (VFMG…IAVL), 288–308 (ILLV…ILQV), and 338–358 (VIVR…ATLK).

The protein belongs to the glycosyltransferase 4 family. MraY subfamily. Requires Mg(2+) as cofactor.

Its subcellular location is the cell inner membrane. It catalyses the reaction UDP-N-acetyl-alpha-D-muramoyl-L-alanyl-gamma-D-glutamyl-meso-2,6-diaminopimeloyl-D-alanyl-D-alanine + di-trans,octa-cis-undecaprenyl phosphate = di-trans,octa-cis-undecaprenyl diphospho-N-acetyl-alpha-D-muramoyl-L-alanyl-D-glutamyl-meso-2,6-diaminopimeloyl-D-alanyl-D-alanine + UMP. It functions in the pathway cell wall biogenesis; peptidoglycan biosynthesis. In terms of biological role, catalyzes the initial step of the lipid cycle reactions in the biosynthesis of the cell wall peptidoglycan: transfers peptidoglycan precursor phospho-MurNAc-pentapeptide from UDP-MurNAc-pentapeptide onto the lipid carrier undecaprenyl phosphate, yielding undecaprenyl-pyrophosphoryl-MurNAc-pentapeptide, known as lipid I. The polypeptide is Phospho-N-acetylmuramoyl-pentapeptide-transferase (Shewanella baltica (strain OS185)).